We begin with the raw amino-acid sequence, 480 residues long: Proline--tRNA ligase (480 aa).

It belongs to the class-II aminoacyl-tRNA synthetase family. ProS type 3 subfamily. As to quaternary structure, homodimer.

It localises to the cytoplasm. The catalysed reaction is tRNA(Pro) + L-proline + ATP = L-prolyl-tRNA(Pro) + AMP + diphosphate. Its function is as follows. Catalyzes the attachment of proline to tRNA(Pro) in a two-step reaction: proline is first activated by ATP to form Pro-AMP and then transferred to the acceptor end of tRNA(Pro). This is Proline--tRNA ligase from Roseiflexus castenholzii (strain DSM 13941 / HLO8).